The sequence spans 962 residues: Ubiquitin carboxyl-terminal hydrolase 4 (962 aa).

Residues 11-122 enclose the DUSP domain; the sequence is PDVETQKTEL…GQQPIVRKVV (112 aa). The tract at residues 27-216 is necessary for interaction with SART3; it reads TLQRGAQWYL…LYQGQVLVIE (190 aa). Positions 133–141 match the Nuclear export signal motif; it reads VEVYLLELK. Residues 142–226 enclose the Ubiquitin-like 1 domain; the sequence is LCENSDPTNV…PQNEDGTWPR (85 aa). The disordered stretch occupies residues 220 to 249; sequence EDGTWPRQSLQSKSSTAPSRNFTTSSKPSA. A compositionally biased stretch (polar residues) spans 225–249; sequence PRQSLQSKSSTAPSRNFTTSSKPSA. The segment at 229-295 is required for USP4 activation by providing conformational flexibility between the DUSP and catalytic domains; it reads LQSKSSTAPS…SYNCQEPPSP (67 aa). A USP domain is found at 302–922; the sequence is CGLGNLGNTC…AAYVLFYQRR (621 aa). Catalysis depends on cysteine 311, which acts as the Nucleophile. The tract at residues 384–386 is regulates ubiquitin dissociation; sequence PQF. Residues 405-407 are necessary for interaction with RBL2; it reads LHE. Serine 445 carries the post-translational modification Phosphoserine. The necessary for interaction with RB1 and RBL2 stretch occupies residues 459–463; sequence LVCPE. Positions 461 and 464 each coordinate Zn(2+). In terms of domain architecture, Ubiquitin-like 2 spans 483–571; it reads LKKDRIMEVF…IFVYEVCNTS (89 aa). Residues 485 to 774 are interacts with DUSP and ubiquitin-like 1 domains and is required for USP4 activation; the sequence is KDRIMEVFLV…SQPQKKKKAA (290 aa). A disordered region spans residues 638–699; it reads EFLSSPLEPG…SESAQKVKGQ (62 aa). Serine 655 is subject to Phosphoserine. A compositionally biased stretch (acidic residues) spans 657-666; it reads EGDEEEEMDH. Serine 675 and serine 680 each carry phosphoserine. Residues 766–771 carry the Nuclear localization signal motif; sequence QPQKKK. Zn(2+) is bound by residues cysteine 798 and cysteine 801. Histidine 880 (proton acceptor) is an active-site residue. Residues 928–937 are compositionally biased toward low complexity; the sequence is STSSLGSFPG. Positions 928–962 are disordered; the sequence is STSSLGSFPGSDGGVKLSSSHQGMGDEEAYNMDTN. Acidic residues predominate over residues 952–962; the sequence is GDEEAYNMDTN.

The protein belongs to the peptidase C19 family. USP4 subfamily. In terms of assembly, interacts with RB1 (both dephosphorylated and hypophosphorylated forms). Interacts with RBL1 and RBL2. Interacts with ADORA2A (via cytoplasmic C-terminus); the interaction is direct. Interacts with SART3; recruits USP4 to its substrate PRPF3. In terms of processing, phosphorylated at Ser-445 by PKB/AKT1 in response to EGF stimulus, promoting its ability deubiquitinate RHEB. Monoubiquitinated by TRIM21. Ubiquitination does not lead to its proteasomal degradation. Autodeubiquitinated. Expressed in brain, kidney, liver and spleen (at protein level).

The protein resides in the cytoplasm. Its subcellular location is the nucleus. The enzyme catalyses Thiol-dependent hydrolysis of ester, thioester, amide, peptide and isopeptide bonds formed by the C-terminal Gly of ubiquitin (a 76-residue protein attached to proteins as an intracellular targeting signal).. Its activity is regulated as follows. The completion of the deubiquitinase reaction is mediated by the DUSP and ubiquitin-like 1 domains which promotes the release of ubiquitin from the catalytic site enabling subsequent reactions to occur. In terms of biological role, deubiquitinating enzyme that removes conjugated ubiquitin from target proteins. Deubiquitinates PDPK1. Deubiquitinates TRIM21. Deubiquitinates receptor ADORA2A which increases the amount of functional receptor at the cell surface. Deubiquitinates HAS2. Deubiquitinates RHEB in response to EGF signaling, promoting mTORC1 signaling. May regulate mRNA splicing through deubiquitination of the U4 spliceosomal protein PRPF3. This may prevent its recognition by the U5 component PRPF8 thereby destabilizing interactions within the U4/U6.U5 snRNP. May also play a role in the regulation of quality control in the ER. In Mus musculus (Mouse), this protein is Ubiquitin carboxyl-terminal hydrolase 4 (Usp4).